The following is a 369-amino-acid chain: DNA replication and repair protein RecF (369 aa).

Position 30-37 (30-37 (GRNAQGKT)) interacts with ATP.

This sequence belongs to the RecF family.

It localises to the cytoplasm. Its function is as follows. The RecF protein is involved in DNA metabolism; it is required for DNA replication and normal SOS inducibility. RecF binds preferentially to single-stranded, linear DNA. It also seems to bind ATP. The protein is DNA replication and repair protein RecF of Streptococcus agalactiae serotype III (strain NEM316).